Consider the following 239-residue polypeptide: MAKYKRVVLKLSGEALAGEQGYGIDPEVIQSIASQIKEIVELDVEVAVVVGGGNIWRGMAGSAKGMDRATADYMGMLATVMNSLALQDSLENLDVQSRVQTSIEMRQVAEPYIRRRAIRHLEKKRVVIFAAGTGNPYFSTDTTAALRAAEIEAEVILMAKNKVDGVYNAEPSVDVNAKKYTSISYLDVLKEGLAVMDSTASSLCMDNNIPLIVFSIMEEGNIKKAVLGEEIGTVVRGSN.

10-13 contacts ATP; that stretch reads KLSG. Residues 18-23 are involved in allosteric activation by GTP; that stretch reads GEQGYG. Residue Gly-52 coordinates UMP. Residues Gly-53 and Arg-57 each coordinate ATP. UMP is bound by residues Asp-72 and 133 to 140; that span reads TGNPYFST. ATP-binding residues include Asn-161, Tyr-167, and Glu-170.

The protein belongs to the UMP kinase family. Homohexamer.

The protein localises to the cytoplasm. The catalysed reaction is UMP + ATP = UDP + ADP. Its pathway is pyrimidine metabolism; CTP biosynthesis via de novo pathway; UDP from UMP (UMPK route): step 1/1. Allosterically activated by GTP. Inhibited by UTP. Its function is as follows. Catalyzes the reversible phosphorylation of UMP to UDP. This Halalkalibacterium halodurans (strain ATCC BAA-125 / DSM 18197 / FERM 7344 / JCM 9153 / C-125) (Bacillus halodurans) protein is Uridylate kinase.